We begin with the raw amino-acid sequence, 527 residues long: Protein Lilipod (527 aa).

At 1-22 (MDEEEEEEVTDLKLQLFHNTVR) the chain is on the extracellular side. A helical transmembrane segment spans residues 23–43 (EHIIFLLLIILLYSSSYVVVS). Topologically, residues 44–65 (RFRRRDRDDLYSNDEDEVLVYR) are cytoplasmic. Residues 66-86 (ISFWLCTFTLAVAEGAAMLLP) form a helical membrane-spanning segment. The Extracellular segment spans residues 87–117 (VSIASNEVLLLYPNSYYVKWLNSSLIQGLWN). Residues 118-138 (HVFLFSNLSLFIFLPFVYLFS) traverse the membrane as a helical segment. The Cytoplasmic portion of the chain corresponds to 139 to 160 (ESTGFVGNKKGILPRVYETFTV). Residues 161 to 181 (FMLMAIIVLVLTAVLSAVFGI) traverse the membrane as a helical segment. Over 182–194 (EKLQFFWFLNLGS) the chain is Extracellular. The chain crosses the membrane as a helical span at residues 195–215 (VHLPFLYSCVSFLGVMLMLIC). The Cytoplasmic segment spans residues 216 to 341 (TPYGFVRLFG…LRTSSTFQRT (126 aa)). Residues 342–362 (FVYPLAMLLLLFCTAVTILLV) form a helical membrane-spanning segment. Residues 363–395 (VQNTLELLIGIKALPLSTRQFALGISSLSKLGP) lie on the Extracellular side of the membrane. A helical membrane pass occupies residues 396–416 (FGAGLEVCLIFYLGATSVVGF). Residues 417-433 (YSMPFMRKVCPKRRQTS) are Cytoplasmic-facing. Residues 434 to 454 (LPQLMLNCGFMLVLSSALPLL) traverse the membrane as a helical segment. Topologically, residues 455–468 (SRIIGITNFDLLGD) are extracellular. A helical membrane pass occupies residues 469–489 (FGAIEWLGNFQIVLLYNLVFG). Topologically, residues 490-527 (TTTALCLANKFTATVRRELRARLVENYVLFTNYISFIN) are cytoplasmic.

This sequence belongs to the LIMR family. As to expression, in the ovary, detected in germline stem cells and their progeny. Also detected in the somatic follicular epithelium.

It localises to the cell membrane. Required during oogenesis to promote self-renewal of germline stem cells, probably by enhancing BMP signaling activity. This is Protein Lilipod from Drosophila melanogaster (Fruit fly).